We begin with the raw amino-acid sequence, 84 residues long: ATP synthase subunit c (84 aa).

A run of 2 helical transmembrane segments spans residues 9–29 (IIGA…GFAI) and 54–74 (IVAG…LLFI).

The protein belongs to the ATPase C chain family. F-type ATPases have 2 components, F(1) - the catalytic core - and F(0) - the membrane proton channel. F(1) has five subunits: alpha(3), beta(3), gamma(1), delta(1), epsilon(1). F(0) has three main subunits: a(1), b(2) and c(10-14). The alpha and beta chains form an alternating ring which encloses part of the gamma chain. F(1) is attached to F(0) by a central stalk formed by the gamma and epsilon chains, while a peripheral stalk is formed by the delta and b chains.

The protein localises to the cell inner membrane. Functionally, f(1)F(0) ATP synthase produces ATP from ADP in the presence of a proton or sodium gradient. F-type ATPases consist of two structural domains, F(1) containing the extramembraneous catalytic core and F(0) containing the membrane proton channel, linked together by a central stalk and a peripheral stalk. During catalysis, ATP synthesis in the catalytic domain of F(1) is coupled via a rotary mechanism of the central stalk subunits to proton translocation. In terms of biological role, key component of the F(0) channel; it plays a direct role in translocation across the membrane. A homomeric c-ring of between 10-14 subunits forms the central stalk rotor element with the F(1) delta and epsilon subunits. This is ATP synthase subunit c from Haemophilus ducreyi (strain 35000HP / ATCC 700724).